The following is a 266-amino-acid chain: 26 kDa endochitinase 2 (266 aa).

The N-terminal stretch at 1–23 (MRSLAVVVAVVATVAMAIGTARG) is a signal peptide. 3 disulfide bridges follow: Cys-46/Cys-108, Cys-120/Cys-128, and Cys-227/Cys-259. Glu-90 serves as the catalytic Proton donor.

The protein belongs to the glycosyl hydrolase 19 family. Chitinase class II subfamily.

It carries out the reaction Random endo-hydrolysis of N-acetyl-beta-D-glucosaminide (1-&gt;4)-beta-linkages in chitin and chitodextrins.. Functionally, defense against chitin-containing fungal pathogens. This Hordeum vulgare (Barley) protein is 26 kDa endochitinase 2.